We begin with the raw amino-acid sequence, 356 residues long: Histidinol-phosphate aminotransferase (356 aa).

Lys214 carries the N6-(pyridoxal phosphate)lysine modification.

This sequence belongs to the class-II pyridoxal-phosphate-dependent aminotransferase family. Histidinol-phosphate aminotransferase subfamily. As to quaternary structure, homodimer. It depends on pyridoxal 5'-phosphate as a cofactor.

It carries out the reaction L-histidinol phosphate + 2-oxoglutarate = 3-(imidazol-4-yl)-2-oxopropyl phosphate + L-glutamate. The protein operates within amino-acid biosynthesis; L-histidine biosynthesis; L-histidine from 5-phospho-alpha-D-ribose 1-diphosphate: step 7/9. The sequence is that of Histidinol-phosphate aminotransferase from Escherichia coli (strain 55989 / EAEC).